The following is a 148-amino-acid chain: Large ribosomal subunit protein uL15 (148 aa).

Basic residues predominate over residues 1 to 30; sequence MPSRLRKTRKLRGHVSHGHGRIGKHRKHPG. A disordered region spans residues 1–38; that stretch reads MPSRLRKTRKLRGHVSHGHGRIGKHRKHPGGRGNAGGL. His-39 carries the post-translational modification (3S)-3-hydroxyhistidine. An N6-acetyllysine mark is found at Lys-47 and Lys-55. The residue at position 68 (Ser-68) is a Phosphoserine. Lys-110 carries the post-translational modification N6-acetyllysine.

The protein belongs to the universal ribosomal protein uL15 family. In terms of processing, hydroxylated on His-39 by MINA.

The sequence is that of Large ribosomal subunit protein uL15 (RPL27A) from Pan troglodytes (Chimpanzee).